The primary structure comprises 334 residues: Probable fructose-bisphosphate aldolase class 1 (334 aa).

The protein belongs to the class I fructose-bisphosphate aldolase family.

It carries out the reaction beta-D-fructose 1,6-bisphosphate = D-glyceraldehyde 3-phosphate + dihydroxyacetone phosphate. It participates in carbohydrate degradation; glycolysis; D-glyceraldehyde 3-phosphate and glycerone phosphate from D-glucose: step 4/4. The protein is Probable fructose-bisphosphate aldolase class 1 of Xanthomonas campestris pv. campestris (strain ATCC 33913 / DSM 3586 / NCPPB 528 / LMG 568 / P 25).